Consider the following 682-residue polypeptide: Epithelial sodium channel subunit alpha (682 aa).

Residues 1-111 (MLMRLLPLPS…CSKHNRMKTA (111 aa)) lie on the Cytoplasmic side of the membrane. Residues 34 to 69 (AQGPLPPQPLQGPLKGDKCEQPGLGPEPTAPQQHTE) form a disordered region. A helical membrane pass occupies residues 112–132 (FWAVLWLCTFGMMYWQFALLF). The Extracellular segment spans residues 133–586 (GEYFSYPVSL…SQWSLWFGSS (454 aa)). 10 cysteine pairs are disulfide-bonded: Cys159–Cys329, Cys253–Cys260, Cys306–Cys313, Cys418–Cys503, Cys440–Cys480, Cys440–Cys499, Cys444–Cys495, Cys453–Cys480, Cys453–Cys503, and Cys455–Cys469. Asn191 carries N-linked (GlcNAc...) asparagine glycosylation. The segment at 201–267 (RSRRSLADTL…SDCFYQTSSS (67 aa)) is gating release of inhibition by proteolysis (GRIP); protease-sensitive region that is responsible for the proteolytic activation of the channel. The tract at residues 221-240 (PEPRRARSSDPSSVRDNNPR) is disordered. An N-linked (GlcNAc...) asparagine glycan is attached at Asn504. The helical transmembrane segment at 587–607 (VLSVVEMAEFMFDLLVITLLM) threads the bilayer. The Cytoplasmic portion of the chain corresponds to 608-682 (LLRRFRSRYW…SSAACAPREP (75 aa)). Positions 653–657 (PPPAY) match the PY motif; recruits WW domain-containing proteins and is thereby required for ubiquitination and inhibition of the channel by NEDD4 and NEDD4L motif.

It belongs to the amiloride-sensitive sodium channel (TC 1.A.6) family. SCNN1A subfamily. Heterotrimer; containing an alpha/SCNN1A, a beta/SCNN1B and a gamma/SCNN1G subunit. Interacts with WWP1 (via WW domains). Interacts with WWP2 (via WW domains); inhibits the channel. Interacts with BPIFA1; the interaction is indirect via SCNN1B and inhibits the proteolytic processing of SCNN1A and SCNN1G and the activation of ENaC. Interacts with the full-length immature form of PCSK9 (pro-PCSK9). Post-translationally, ubiquitinated. Can be ubiquitinated at multiple sites and undergo monoubiquitination and polyubiquitination. Ubiquitination by NEDD4 or NEDD4L inhibits the ENaC channel through endocytosis, intracellular retention and degradation of its individual subunits. In terms of processing, N-glycosylated. ENaC is activated through the proteolytic maturation of its subunits. Furin cleaves the SCNN1A subunit, which results in a stepwise increase in the open probability of the channel due to the release of an inhibitory tract. BPIFA1, which is recruited by the SCNN1B subunit, prevents the proteolytic activation of ENaC.

The protein localises to the apical cell membrane. Its subcellular location is the cell projection. It is found in the cilium. The protein resides in the cytoplasmic granule. It localises to the cytoplasm. The protein localises to the cytoplasmic vesicle. Its subcellular location is the secretory vesicle. It is found in the acrosome. The protein resides in the flagellum. It carries out the reaction Na(+)(in) = Na(+)(out). Its activity is regulated as follows. Originally identified and characterized by its inhibition by the diuretic drug amiloride. In terms of biological role, this is one of the three pore-forming subunits of the heterotrimeric epithelial sodium channel (ENaC), a critical regulator of sodium balance and fluid homeostasis. ENaC operates in epithelial tissues, where it mediates the electrodiffusion of sodium ions from extracellular fluid through the apical membrane of cells, with water following osmotically. It plays a key role in maintaining sodium homeostasis through electrogenic sodium reabsorption in the kidneys. Additionally, ENaC is essential for airway surface liquid homeostasis, which is crucial for proper mucus clearance. In Cavia porcellus (Guinea pig), this protein is Epithelial sodium channel subunit alpha.